Here is a 106-residue protein sequence, read N- to C-terminus: Small ribosomal subunit protein uS10 (106 aa).

Belongs to the universal ribosomal protein uS10 family. Part of the 30S ribosomal subunit.

Involved in the binding of tRNA to the ribosomes. This chain is Small ribosomal subunit protein uS10, found in Solibacter usitatus (strain Ellin6076).